The sequence spans 360 residues: Serine/threonine transporter SstT (360 aa).

The next 9 helical transmembrane spans lie at 17–37 (IGIG…ITVI), 40–60 (FGSL…LTLV), 78–98 (VICL…GASY), 138–158 (ALAT…GLAF), 179–199 (VVGW…FDTI), 212–232 (LLLL…NPLI), 295–315 (MAGA…TLGI), 316–336 (SVDF…AAGA), and 339–359 (VAGG…VPYV).

This sequence belongs to the dicarboxylate/amino acid:cation symporter (DAACS) (TC 2.A.23) family.

Its subcellular location is the cell membrane. It catalyses the reaction L-serine(in) + Na(+)(in) = L-serine(out) + Na(+)(out). The enzyme catalyses L-threonine(in) + Na(+)(in) = L-threonine(out) + Na(+)(out). In terms of biological role, involved in the import of serine and threonine into the cell, with the concomitant import of sodium (symport system). The polypeptide is Serine/threonine transporter SstT (Streptococcus suis (strain 05ZYH33)).